A 131-amino-acid chain; its full sequence is UPF0102 protein YraN (131 aa).

This sequence belongs to the UPF0102 family.

The chain is UPF0102 protein YraN from Salmonella agona (strain SL483).